We begin with the raw amino-acid sequence, 494 residues long: Probable malate:quinone oxidoreductase 3 (494 aa).

The protein belongs to the MQO family. It depends on FAD as a cofactor.

The enzyme catalyses (S)-malate + a quinone = a quinol + oxaloacetate. The protein operates within carbohydrate metabolism; tricarboxylic acid cycle; oxaloacetate from (S)-malate (quinone route): step 1/1. This chain is Probable malate:quinone oxidoreductase 3, found in Staphylococcus epidermidis (strain ATCC 12228 / FDA PCI 1200).